A 300-amino-acid chain; its full sequence is Tubulin polyglutamylase complex subunit 2 (300 aa).

The interval 257-300 is disordered; sequence KIVIPKKKGPVQPAGGQKGPSGPSGPSTSSTSKSSSGSGNPTRK. Residues 276-300 are compositionally biased toward low complexity; that stretch reads PSGPSGPSTSSTSKSSSGSGNPTRK.

As to quaternary structure, part of the neuronal tubulin polyglutamylase complex which contains TPGS1, TPGS2, TTLL1, LRRC49 and NICN1. Interacts with CSTPP1 and LRRC49.

It is found in the cytoplasm. It localises to the cytoskeleton. The protein localises to the microtubule organizing center. Its subcellular location is the centrosome. The protein resides in the centriolar satellite. Functionally, subunit of the tubulin polyglutamylase complex (TPGC). The complex mediates cilia and flagella polyglutamylation which is essential for their biogenesis and motility. This Homo sapiens (Human) protein is Tubulin polyglutamylase complex subunit 2 (TPGS2).